The chain runs to 317 residues: Protoheme IX farnesyltransferase (317 aa).

6 helical membrane passes run 25–45, 54–74, 117–137, 167–189, 244–264, and 281–301; these read FFAL…LVGM, PVIG…SGCL, LMLG…TIVF, IGQA…IIFI, LGFG…AMLV, and AAMS…SALL.

Belongs to the UbiA prenyltransferase family. Protoheme IX farnesyltransferase subfamily.

Its subcellular location is the cell inner membrane. The enzyme catalyses heme b + (2E,6E)-farnesyl diphosphate + H2O = Fe(II)-heme o + diphosphate. Its pathway is porphyrin-containing compound metabolism; heme O biosynthesis; heme O from protoheme: step 1/1. Its function is as follows. Converts heme B (protoheme IX) to heme O by substitution of the vinyl group on carbon 2 of heme B porphyrin ring with a hydroxyethyl farnesyl side group. In Methylobacterium nodulans (strain LMG 21967 / CNCM I-2342 / ORS 2060), this protein is Protoheme IX farnesyltransferase.